The chain runs to 72 residues: Translation initiation factor IF-1 (72 aa).

The S1-like domain occupies 1–72; it reads MSKEDMIEFS…SKGRITFRFK (72 aa).

The protein belongs to the IF-1 family. Component of the 30S ribosomal translation pre-initiation complex which assembles on the 30S ribosome in the order IF-2 and IF-3, IF-1 and N-formylmethionyl-tRNA(fMet); mRNA recruitment can occur at any time during PIC assembly.

The protein localises to the cytoplasm. In terms of biological role, one of the essential components for the initiation of protein synthesis. Stabilizes the binding of IF-2 and IF-3 on the 30S subunit to which N-formylmethionyl-tRNA(fMet) subsequently binds. Helps modulate mRNA selection, yielding the 30S pre-initiation complex (PIC). Upon addition of the 50S ribosomal subunit IF-1, IF-2 and IF-3 are released leaving the mature 70S translation initiation complex. The protein is Translation initiation factor IF-1 of Gluconacetobacter diazotrophicus (strain ATCC 49037 / DSM 5601 / CCUG 37298 / CIP 103539 / LMG 7603 / PAl5).